Reading from the N-terminus, the 455-residue chain is Nuclear receptor subfamily 6 group A member 1-B (455 aa).

The nuclear receptor DNA-binding region spans 38 to 113; that stretch reads ERWCLICGDR…MGMNRKAIRE (76 aa). 2 NR C4-type zinc fingers span residues 41-61 and 77-96; these read CLIC…CEGC and CNRD…CQYC. Residues 145–173 form a disordered region; it reads EGSDLSDSWSHGYSNHSSPGNSLSEGGQS. The span at 149–165 shows a compositional bias: polar residues; it reads LSDSWSHGYSNHSSPGN. The NR LBD domain maps to 215-446; the sequence is QTHTLTGQIL…YSCTTNQNPW (232 aa).

It belongs to the nuclear hormone receptor family. NR6 subfamily. As to quaternary structure, homodimer.

Its subcellular location is the nucleus. Its function is as follows. Probable orphan nuclear receptor. Binds to a response element containing repeats of the motif 5'-AGGTCA-3'. The polypeptide is Nuclear receptor subfamily 6 group A member 1-B (Danio rerio (Zebrafish)).